A 430-amino-acid polypeptide reads, in one-letter code: Chaperone SurA (430 aa).

Positions 1–25 (MQIIKTTIATFTAIAFTGAASFTSA) are cleaved as a signal peptide. PpiC domains lie at 176-277 (SPDY…KLYE) and 286-385 (VNQT…KVEE).

The protein localises to the periplasm. It catalyses the reaction [protein]-peptidylproline (omega=180) = [protein]-peptidylproline (omega=0). Its function is as follows. Chaperone involved in the correct folding and assembly of outer membrane proteins. Recognizes specific patterns of aromatic residues and the orientation of their side chains, which are found more frequently in integral outer membrane proteins. May act in both early periplasmic and late outer membrane-associated steps of protein maturation. This Saccharophagus degradans (strain 2-40 / ATCC 43961 / DSM 17024) protein is Chaperone SurA.